We begin with the raw amino-acid sequence, 163 residues long: MFLHSGPARGPCTAAGRSASVRVPVQVAHELQGPDAIVFGAEVEQVHLVANELDAGRVQLLLAQGVAAAVLLVQVVMGEELGEQGHQQARGEVADGQAALLDTAKMLVAEQAVGAGQLQVGLGISNLSKSIGTSQIFLERHRSPLKLSSTLITEMSSGRLEEL.

This is an uncharacterized protein from Homo sapiens (Human).